A 2051-amino-acid chain; its full sequence is Fatty acid synthase subunit beta (2051 aa).

M1 carries the N-acetylmethionine modification. Residues 1-468 (MDAYSTRPLT…VYDTFDGSDL (468 aa)) are acetyltransferase. The active-site For acetyltransferase activity is the S274. The tract at residues 480–868 (VDCIIRLPVK…TRGVMLWKEF (389 aa)) is enoyl reductase. A Phosphothreonine modification is found at T733. The residue at position 1121 (S1121) is a Phosphoserine. Residues 1144 to 1626 (GSEINWRHAS…LPNTALKTSI (483 aa)) are dehydratase. Residue K1364 forms a Glycyl lysine isopeptide (Lys-Gly) (interchain with G-Cter in ubiquitin) linkage. One can recognise a MaoC-like domain in the interval 1523–1648 (NGSTLEQKVN…KFETRNEDDV (126 aa)). The interval 1627-1845 (QHVGMINGRK…MTMQVAVPRD (219 aa)) is malonyl/palmitoyl transferase. The For malonyltransferase activity role is filled by S1808.

This sequence belongs to the fungal fatty acid synthetase subunit beta family. In terms of assembly, [Alpha(6)beta(6)] hexamers of two multifunctional subunits (alpha and beta).

The catalysed reaction is acetyl-CoA + n malonyl-CoA + 2n NADPH + 4n H(+) = a long-chain-acyl-CoA + n CoA + n CO2 + 2n NADP(+).. It carries out the reaction holo-[ACP] + acetyl-CoA = acetyl-[ACP] + CoA. It catalyses the reaction holo-[ACP] + malonyl-CoA = malonyl-[ACP] + CoA. The enzyme catalyses a (3R)-hydroxyacyl-[ACP] = a (2E)-enoyl-[ACP] + H2O. The catalysed reaction is a 2,3-saturated acyl-[ACP] + NAD(+) = a (2E)-enoyl-[ACP] + NADH + H(+). It carries out the reaction (9Z)-octadecenoyl-[ACP] + H2O = (9Z)-octadecenoate + holo-[ACP] + H(+). In terms of biological role, fatty acid synthetase catalyzes the formation of long-chain fatty acids from acetyl-CoA, malonyl-CoA and NADPH. The beta subunit contains domains for: [acyl-carrier-protein] acetyltransferase and malonyltransferase, S-acyl fatty acid synthase thioesterase, enoyl-[acyl-carrier-protein] reductase, and 3-hydroxypalmitoyl-[acyl-carrier-protein] dehydratase. The chain is Fatty acid synthase subunit beta (FAS1) from Saccharomyces cerevisiae (strain ATCC 204508 / S288c) (Baker's yeast).